We begin with the raw amino-acid sequence, 229 residues long: Enolase-phosphatase E1 (229 aa).

Positions 207–229 are disordered; sequence RDPASHHPQVQRFDDIHPEQIPA. Residues 218–229 show a composition bias toward basic and acidic residues; sequence RFDDIHPEQIPA.

Belongs to the HAD-like hydrolase superfamily. MasA/MtnC family. As to quaternary structure, monomer. Mg(2+) is required as a cofactor.

The enzyme catalyses 5-methylsulfanyl-2,3-dioxopentyl phosphate + H2O = 1,2-dihydroxy-5-(methylsulfanyl)pent-1-en-3-one + phosphate. The protein operates within amino-acid biosynthesis; L-methionine biosynthesis via salvage pathway; L-methionine from S-methyl-5-thio-alpha-D-ribose 1-phosphate: step 3/6. Its pathway is amino-acid biosynthesis; L-methionine biosynthesis via salvage pathway; L-methionine from S-methyl-5-thio-alpha-D-ribose 1-phosphate: step 4/6. Functionally, bifunctional enzyme that catalyzes the enolization of 2,3-diketo-5-methylthiopentyl-1-phosphate (DK-MTP-1-P) into the intermediate 2-hydroxy-3-keto-5-methylthiopentenyl-1-phosphate (HK-MTPenyl-1-P), which is then dephosphorylated to form the acireductone 1,2-dihydroxy-3-keto-5-methylthiopentene (DHK-MTPene). The polypeptide is Enolase-phosphatase E1 (Klebsiella pneumoniae (strain 342)).